The chain runs to 837 residues: Tuftelin-interacting protein 11 (837 aa).

Basic and acidic residues-rich tracts occupy residues 1-13 (MSLSHLYRDGEGR) and 50-64 (TYGVWAEHDSDDERP). Disordered stretches follow at residues 1–21 (MSLSHLYRDGEGRVDDDDDER) and 50–136 (TYGV…AGGT). The tract at residues 1 to 50 (MSLSHLYRDGEGRVDDDDDERENFEITDWDLQNEFNPNRQRHWQTKEEAT) is required for interaction with DHX15. Phosphoserine is present on residues S2, S59, and S98. Residues 91 to 102 (EEAELDDSEDEE) are compositionally biased toward acidic residues. Over residues 103-116 (KPGKQEELPKDLGP) the composition is skewed to basic and acidic residues. A Phosphoserine modification is found at S144. In terms of domain architecture, G-patch spans 149 to 195 (TKGIGQKLLQKMGYVPGRGLGKNAQGIINPIEAKQRKGKGAVGAYGS). The disordered stretch occupies residues 183-236 (QRKGKGAVGAYGSERTTQSLQDFPVVDSEEEAEEEFQKELSQWRKDPSGSKKKP). A Phosphoserine modification is found at S210. Residues 217 to 231 (EFQKELSQWRKDPSG) show a composition bias toward basic and acidic residues. The Nuclear localization signal motif lies at 700–705 (VKDKFN). Residues 710–734 (IMNRAVSSNVGAYMQPGARENIAYL) are required for nuclear speckle localization.

This sequence belongs to the TFP11/STIP family. In terms of assembly, identified in the spliceosome C complex. Found in the Intron Large (IL) complex, a post-mRNA release spliceosomal complex containing the excised intron, U2, U5 and U6 snRNPs, and splicing factors. Interacts with TUFT1. Interacts with DHX15; indicative for a recruitment of DHX15 to the IL complex. Interacts with GCFC2.

It localises to the cytoplasm. The protein localises to the nucleus. Involved in pre-mRNA splicing, specifically in spliceosome disassembly during late-stage splicing events. Intron turnover seems to proceed through reactions in two lariat-intron associated complexes termed Intron Large (IL) and Intron Small (IS). In cooperation with DHX15 seems to mediate the transition of the U2, U5 and U6 snRNP-containing IL complex to the snRNP-free IS complex leading to efficient debranching and turnover of excised introns. May play a role in the differentiation of ameloblasts and odontoblasts or in the forming of the enamel extracellular matrix. This is Tuftelin-interacting protein 11 (TFIP11) from Oryctolagus cuniculus (Rabbit).